A 314-amino-acid polypeptide reads, in one-letter code: 4-hydroxy-3-methylbut-2-enyl diphosphate reductase (314 aa).

C12 contributes to the [4Fe-4S] cluster binding site. (2E)-4-hydroxy-3-methylbut-2-enyl diphosphate contacts are provided by H43 and H81. Positions 43 and 81 each coordinate dimethylallyl diphosphate. Residues H43 and H81 each coordinate isopentenyl diphosphate. C103 lines the [4Fe-4S] cluster pocket. H131 contacts (2E)-4-hydroxy-3-methylbut-2-enyl diphosphate. H131 provides a ligand contact to dimethylallyl diphosphate. H131 provides a ligand contact to isopentenyl diphosphate. E133 (proton donor) is an active-site residue. T170 is a (2E)-4-hydroxy-3-methylbut-2-enyl diphosphate binding site. C198 serves as a coordination point for [4Fe-4S] cluster. Residues S226, N228, and S271 each coordinate (2E)-4-hydroxy-3-methylbut-2-enyl diphosphate. The dimethylallyl diphosphate site is built by S226, N228, and S271. Positions 226, 228, and 271 each coordinate isopentenyl diphosphate.

Belongs to the IspH family. It depends on [4Fe-4S] cluster as a cofactor.

The catalysed reaction is isopentenyl diphosphate + 2 oxidized [2Fe-2S]-[ferredoxin] + H2O = (2E)-4-hydroxy-3-methylbut-2-enyl diphosphate + 2 reduced [2Fe-2S]-[ferredoxin] + 2 H(+). The enzyme catalyses dimethylallyl diphosphate + 2 oxidized [2Fe-2S]-[ferredoxin] + H2O = (2E)-4-hydroxy-3-methylbut-2-enyl diphosphate + 2 reduced [2Fe-2S]-[ferredoxin] + 2 H(+). The protein operates within isoprenoid biosynthesis; dimethylallyl diphosphate biosynthesis; dimethylallyl diphosphate from (2E)-4-hydroxy-3-methylbutenyl diphosphate: step 1/1. It participates in isoprenoid biosynthesis; isopentenyl diphosphate biosynthesis via DXP pathway; isopentenyl diphosphate from 1-deoxy-D-xylulose 5-phosphate: step 6/6. In terms of biological role, catalyzes the conversion of 1-hydroxy-2-methyl-2-(E)-butenyl 4-diphosphate (HMBPP) into a mixture of isopentenyl diphosphate (IPP) and dimethylallyl diphosphate (DMAPP). Acts in the terminal step of the DOXP/MEP pathway for isoprenoid precursor biosynthesis. The chain is 4-hydroxy-3-methylbut-2-enyl diphosphate reductase from Bacillus pumilus (strain SAFR-032).